Consider the following 714-residue polypeptide: MSKQTFTTTFAGKPLVVEVGQVAKRANGATVVRYGESTVLTAAVMSKKMSTGDFFPLQVNYEEKMYAAGKFPGGWMKREGRPSTDATLTARLIDRPIRPMFAEGFRNEVQVINTVLSYDEDASAPMAAMLGSSLALSISDIPFNGPIAGVQVAYVEGEFIINPDKAQQEASLLELTVAGTKDAINMVESGAKELPEAIMLEALLVGHKAIQELIAFQEEIVAAVGKEKAEVELLQVAADLQAEIIETYNADLQQAIQVEEKKAREAATEAVKERVIAAYEERYAADEEHDRIMRDVAEILEQMEHAEVRRLITEDKVRPDGRRVDEIRPLAAEIDFLPRVHGSGLFTRGQTQALSVLTLAPMGDTQIIDGLEPEYKKRFLHHYNFPQYSVGETGRYGAAGRREIGHGALGERALAQVLPSLEAFPYAIRLVAEVLESNGSSSQASICAGTLALMAAGVPIKAPVAGIAMGLISDGTNYTVLTDIQGLEDHFGDMDFKVAGTRQGITALQMDIKIEGITPQILEEALAQAKKARFEILDLIEATIAEPRPELAPTAPKIDTIKIDVDKIKVVIGKGGETIDKIIAETGVKIDIDEEGNVSIYSSDQDAINRAKEIIASLVREAKVGEVYHAKVVRIEKFGAFVNLFDKTDALVHISEIAWSRTTNVSDVLEIGEEVDVKVIKVDDKGRIDASMKALVPRPPKPEKSEAKKEGKHD.

Residues Asp-489 and Asp-495 each contribute to the Mg(2+) site. Residues 556 to 615 (PKIDTIKIDVDKIKVVIGKGGETIDKIIAETGVKIDIDEEGNVSIYSSDQDAINRAKEII) form the KH domain. An S1 motif domain is found at 625–693 (GEVYHAKVVR…DKGRIDASMK (69 aa)). The tract at residues 691–714 (SMKALVPRPPKPEKSEAKKEGKHD) is disordered. Basic and acidic residues predominate over residues 700 to 714 (PKPEKSEAKKEGKHD).

Belongs to the polyribonucleotide nucleotidyltransferase family. Requires Mg(2+) as cofactor.

It is found in the cytoplasm. It catalyses the reaction RNA(n+1) + phosphate = RNA(n) + a ribonucleoside 5'-diphosphate. In terms of biological role, involved in mRNA degradation. Catalyzes the phosphorolysis of single-stranded polyribonucleotides processively in the 3'- to 5'-direction. This chain is Polyribonucleotide nucleotidyltransferase, found in Streptococcus equi subsp. equi (strain 4047).